A 561-amino-acid chain; its full sequence is MKTDWWKDAVVYQIYPRSFQDSNGDGIGDLRGIISRLDYIKELGADVIWICPIYPSPNVDYGYDVTNHKAIMDSYGTMDDFHELLDQVHQRGLKLVMDFVLNHTSVEHPWFKEAELDKNSKYRSYYYWRPGTKNGPPTDWLSNYGCPVWQYEEHTGEYYLHMNAVKQADLNWENPEVRQAVYDMMKFWLDKGVDGLRIDQLHLISKKEYLPSYEDYINQQAEPKPFQPNGERIHDYLKEITDEVFSHYDVMSVGEVGSVTPEEGLKYTGTDKHELNMIFHFQHMELDQQPGKEHWDLKPLELSDLKSVLTKWQKKLEHQGWNTLFWCNHDQPRIVSRFGDDGEYRKASAKMLAAVIYFMKGTPYIYQGEEIGMTNAPFTRIEDYKDIQTINMYHKRVFEKGYDPNDVMRSILAKSRDHARTPMQWNSGKNAGFTDGTPWLKVNPNFTAINVEEAQGDPDSVLNYYKKLISLRKQYADLMKGSFDLLLPDDPQLFVYMRENSKQQLLSVNNFSKEQAVFQWPKNCGKAQASLLLSNYNNDDLDDEMVFRPYESRVYLLDKTN.

D199 functions as the Nucleophile in the catalytic mechanism. E255 (proton donor) is an active-site residue.

It belongs to the glycosyl hydrolase 13 family.

The protein resides in the cytoplasm. The enzyme catalyses Hydrolysis of (1-&gt;6)-alpha-D-glucosidic linkages in some oligosaccharides produced from starch and glycogen by alpha-amylase, and in isomaltose.. The sequence is that of Probable oligo-1,6-glucosidase 2 (ycdG) from Bacillus subtilis (strain 168).